The following is an 82-amino-acid chain: Small ribosomal subunit protein bS16 (82 aa).

The protein belongs to the bacterial ribosomal protein bS16 family.

This Francisella tularensis subsp. tularensis (strain FSC 198) protein is Small ribosomal subunit protein bS16.